A 590-amino-acid chain; its full sequence is MGRARPGQRGPPSPGPAAQPPAPPRRRARSLALLGALLAAAAAAAVRVCARHAEAQAAARQELALKTLGTDGLFLFSSLDTDGDMYISPEEFKPIAEKLTGSCSVTQTGVQWCSHSSLQPQLPWLNUSSCLSLLRSTPAASCEEEELPPDPSEETLTIEARFQPLLPETMTKSKDGFLGVSRLALSGLRNWTAAASPSAVFATRHFQPFLPPPGQELGEPWWIIPSELSMFTGYLSNNRFYPPPPKGKEVIIHRLLSMFHPRPFVKTRFAPQGAVACLTAISDFYYTVMFRIHAEFQLSEPPDFPFWFSPAQFTGHIILSKDATHVRDFRLFVPNHRSLNVDMEWLYGASESSNMEVDIGYIPQMELEATGPSVPSVILDEDGSMIDSHLPSGEPLQFVFEEIKWQQELSWEEAARRLEVAMYPFKKVSYLPFTEAFDRAKAENKLVHSILLWGALDDQSCUGSGRTLRETVLESSPILTLLNESFISTWSLVKELEELQNNQENSSHQKLAGLHLEKYSFPVEMMICLPNGTVVHHINANYFLDITSVKPEEIESNLFSFSSTFEDPSTATYMQFLKEGLRRGLPLLQP.

Positions 1–26 (MGRARPGQRGPPSPGPAAQPPAPPRR) are disordered. The first 43 residues, 1 to 43 (MGRARPGQRGPPSPGPAAQPPAPPRRRARSLALLGALLAAAAA), serve as a signal peptide directing secretion. The span at 9–23 (RGPPSPGPAAQPPAP) shows a compositional bias: pro residues. The region spanning 67–102 (TLGTDGLFLFSSLDTDGDMYISPEEFKPIAEKLTGS) is the EF-hand domain. Asn126 is a glycosylation site (N-linked (GlcNAc...) asparagine). A non-standard amino acid (selenocysteine) is located at residue Sec127. Asn190 is a glycosylation site (N-linked (GlcNAc...) asparagine). Position 462 (Sec462) is a non-standard amino acid, selenocysteine. Asn483, Asn505, and Asn531 each carry an N-linked (GlcNAc...) asparagine glycan.

As to quaternary structure, interacts with RYR1, RYR2 and RYR3. N-glycosylated. Isoform 1 and isoform 2 are expressed in skeletal muscle, brain, lung and placenta. Isoform 2 is also expressed in heart, diaphragm and stomach.

It is found in the endoplasmic reticulum membrane. Functionally, plays an important role in cell protection against oxidative stress and in the regulation of redox-related calcium homeostasis. Regulates the calcium level of the ER by protecting the calcium pump ATP2A2 against the oxidoreductase ERO1A-mediated oxidative damage. Within the ER, ERO1A activity increases the concentration of H(2)O(2), which attacks the luminal thiols in ATP2A2 and thus leads to cysteinyl sulfenic acid formation (-SOH) and SEPN1 reduces the SOH back to free thiol (-SH), thus restoring ATP2A2 activity. Acts as a modulator of ryanodine receptor (RyR) activity: protects RyR from oxidation due to increased oxidative stress, or directly controls the RyR redox state, regulating the RyR-mediated calcium mobilization required for normal muscle development and differentiation. Its function is as follows. Essential for muscle regeneration and satellite cell maintenance in skeletal muscle. This chain is Selenoprotein N, found in Homo sapiens (Human).